The following is a 64-amino-acid chain: Large ribosomal subunit protein bL35 (64 aa).

Positions 1 to 22 (MPKAKTHSGASKRFRRTGTGKI) are disordered.

Belongs to the bacterial ribosomal protein bL35 family.

The chain is Large ribosomal subunit protein bL35 from Mycobacterium tuberculosis (strain ATCC 25177 / H37Ra).